The following is a 103-amino-acid chain: MYAVFQSGGKQHRVSEGQTVRLEKLDIATGEAVEFDLVLMVANGEEIKIGVPYVDGGKIKAEVVAHGRGEKVKIVKFRRRKHYRKQAGHRQWFTDVKITGISA.

It belongs to the bacterial ribosomal protein bL21 family. Part of the 50S ribosomal subunit. Contacts protein L20.

Functionally, this protein binds to 23S rRNA in the presence of protein L20. The protein is Large ribosomal subunit protein bL21 of Pectobacterium atrosepticum (strain SCRI 1043 / ATCC BAA-672) (Erwinia carotovora subsp. atroseptica).